The following is a 462-amino-acid chain: Chromosomal replication initiator protein DnaA (462 aa).

Residues methionine 1–alanine 83 are domain I, interacts with DnaA modulators. The domain II stretch occupies residues alanine 83–serine 125. The tract at residues serine 105–valine 127 is disordered. Residues tryptophan 112–valine 127 show a composition bias toward polar residues. The segment at asparagine 126–alanine 342 is domain III, AAA+ region. 4 residues coordinate ATP: glycine 170, glycine 172, lysine 173, and threonine 174. Positions asparagine 343–serine 462 are domain IV, binds dsDNA.

This sequence belongs to the DnaA family. In terms of assembly, oligomerizes as a right-handed, spiral filament on DNA at oriC.

The protein resides in the cytoplasm. Plays an essential role in the initiation and regulation of chromosomal replication. ATP-DnaA binds to the origin of replication (oriC) to initiate formation of the DNA replication initiation complex once per cell cycle. Binds the DnaA box (a 9 base pair repeat at the origin) and separates the double-stranded (ds)DNA. Forms a right-handed helical filament on oriC DNA; dsDNA binds to the exterior of the filament while single-stranded (ss)DNA is stabiized in the filament's interior. The ATP-DnaA-oriC complex binds and stabilizes one strand of the AT-rich DNA unwinding element (DUE), permitting loading of DNA polymerase. After initiation quickly degrades to an ADP-DnaA complex that is not apt for DNA replication. Binds acidic phospholipids. This chain is Chromosomal replication initiator protein DnaA, found in Yersinia enterocolitica serotype O:8 / biotype 1B (strain NCTC 13174 / 8081).